The sequence spans 973 residues: Sodium/calcium exchanger 1 (973 aa).

The signal sequence occupies residues 1 to 35; that stretch reads MYNMRRLSLSPTFSMGFHLLVTVSLLFSHVDHVIA. The Extracellular segment spans residues 36 to 74; it reads ETEMEGEGNETGECTGSYYCKKGVILPIWEPQDPSFGDK. Residue Asn44 is glycosylated (N-linked (GlcNAc...) asparagine). Residues 75–95 traverse the membrane as a helical segment; the sequence is IARATVYFVAMVYMFLGVSII. Over 96–136 the chain is Cytoplasmic; sequence ADRFMSSIEVITSQEKEITIKKPNGETTKTTVRIWNETVSN. A helical membrane pass occupies residues 137–157; that stretch reads LTLMALGSSAPEILLSVIEVC. The stretch at 141 to 181 is one Alpha-1 repeat; the sequence is ALGSSAPEILLSVIEVCGHNFTAGDLGPSTIVGSAAFNMFI. At 158-170 the chain is on the extracellular side; sequence GHNFTAGDLGPST. Asn160 is a glycosylation site (N-linked (GlcNAc...) asparagine). The chain crosses the membrane as a helical span at residues 171–191; the sequence is IVGSAAFNMFIIIALCVYVVP. Residues 192–204 lie on the Cytoplasmic side of the membrane; that stretch reads DGETRKIKHLRVF. A helical transmembrane segment spans residues 205-225; it reads FVTAAWSIFAYTWLYIILSVI. Over 226–231 the chain is Extracellular; the sequence is SPGVVE. A helical transmembrane segment spans residues 232-252; that stretch reads VWEGLLTFFFFPICVVFAWVA. The Cytoplasmic segment spans residues 253–800; the sequence is DRRLLFYKYV…FVPPTEYWNG (548 aa). The putative calmodulin-binding region stretch occupies residues 254-273; the sequence is RRLLFYKYVYKRYRAGKQRG. Phosphoserine occurs at positions 285 and 392. Calx-beta domains follow at residues 396 to 496 and 527 to 627; these read VNTE…VHLS and ATVT…LEIG. Residues Glu420, Asp456, Asp481, Asp482, Ile484, Glu486, Glu489, Asp533, Asp534, Asp535, Glu551, Asp587, Asp613, Glu614, Glu615, and Glu718 each contribute to the Ca(2+) site. Residues 801-821 form a helical membrane-spanning segment; it reads WACFIVSILMIGLLTAFIGDL. Topologically, residues 822–824 are extracellular; it reads ASH. The chain crosses the membrane as a helical span at residues 825 to 845; that stretch reads FGCTIGLKDSVTAVVFVALGT. An Alpha-2 repeat occupies 842-878; the sequence is ALGTSVPDTFASKVAATQDQYADASIGNVTGSNAVNV. Residues 846-874 lie on the Cytoplasmic side of the membrane; it reads SVPDTFASKVAATQDQYADASIGNVTGSN. Residues 875–895 form a helical membrane-spanning segment; sequence AVNVFLGIGVAWSIAAIYHAA. Residues 896–906 are Extracellular-facing; it reads NGEQFKVSPGT. The chain crosses the membrane as a helical span at residues 907-927; the sequence is LAFSVTLFTIFAFINVGVLLY. Residues 928-944 are Cytoplasmic-facing; the sequence is RRRPEIGGELGGPRTAK. A helical membrane pass occupies residues 945 to 965; it reads LLTSCLFVLLWLLYIFFSSLE. The Extracellular portion of the chain corresponds to 966–973; that stretch reads AYCHIKGF.

It belongs to the Ca(2+):cation antiporter (CaCA) (TC 2.A.19) family. SLC8 subfamily. As to expression, detected primarily in heart and at lower levels in brain. Expressed in cardiac sarcolemma, brain, kidney, liver, pancreas, skeletal muscle, placenta and lung.

The protein localises to the cell membrane. The enzyme catalyses Ca(2+)(in) + 3 Na(+)(out) = Ca(2+)(out) + 3 Na(+)(in). Its activity is regulated as follows. Activated by micromolar levels of Ca(2+). Its function is as follows. Mediates the exchange of one Ca(2+) ion against three to four Na(+) ions across the cell membrane, and thereby contributes to the regulation of cytoplasmic Ca(2+) levels and Ca(2+)-dependent cellular processes. Contributes to Ca(2+) transport during excitation-contraction coupling in muscle. In a first phase, voltage-gated channels mediate the rapid increase of cytoplasmic Ca(2+) levels due to release of Ca(2+) stores from the endoplasmic reticulum. SLC8A1 mediates the export of Ca(2+) from the cell during the next phase, so that cytoplasmic Ca(2+) levels rapidly return to baseline. Required for normal embryonic heart development and the onset of heart contractions. The protein is Sodium/calcium exchanger 1 (SLC8A1) of Homo sapiens (Human).